The primary structure comprises 366 residues: Cyclin-O protein A (366 aa).

2 disordered regions span residues 18–55 (AAFS…GIKK) and 80–99 (YETP…PYDS).

It belongs to the cyclin family.

The protein resides in the cytoplasm. Its function is as follows. Specifically required for generation of multiciliated cells, possibly by promoting a cell cycle state compatible with centriole amplification and maturation. Acts downstream of mcidas to promote mother centriole amplification and maturation in preparation for apical docking. The protein is Cyclin-O protein A (ccno-a) of Xenopus laevis (African clawed frog).